A 403-amino-acid chain; its full sequence is Phosphoglycerate kinase (403 aa).

Residues 21–23, R36, 59–62, R119, and R154 contribute to the substrate site; these read DFN and HLGR. ATP contacts are provided by residues K207, G299, E330, and 357-360; that span reads GGDA.

This sequence belongs to the phosphoglycerate kinase family. Monomer.

It is found in the cytoplasm. It catalyses the reaction (2R)-3-phosphoglycerate + ATP = (2R)-3-phospho-glyceroyl phosphate + ADP. It functions in the pathway carbohydrate degradation; glycolysis; pyruvate from D-glyceraldehyde 3-phosphate: step 2/5. The polypeptide is Phosphoglycerate kinase (Chlamydia felis (strain Fe/C-56) (Chlamydophila felis)).